The sequence spans 665 residues: Translation factor guf1, mitochondrial (665 aa).

The transit peptide at 1–40 directs the protein to the mitochondrion; the sequence is MRGCLQLARWLSAAPTRPAASHWPGLCAAPRFFSHSAILR. The 181-residue stretch at 67–247 folds into the tr-type G domain; the sequence is ERYRNFCIVA…TVVDKIPAPI (181 aa). GTP contacts are provided by residues 76 to 83, 140 to 144, and 194 to 197; these read AHVDHGKS, DTPGH, and NKVD.

This sequence belongs to the TRAFAC class translation factor GTPase superfamily. Classic translation factor GTPase family. LepA subfamily.

Its subcellular location is the mitochondrion inner membrane. The catalysed reaction is GTP + H2O = GDP + phosphate + H(+). Promotes mitochondrial protein synthesis. May act as a fidelity factor of the translation reaction, by catalyzing a one-codon backward translocation of tRNAs on improperly translocated ribosomes. Binds to mitochondrial ribosomes in a GTP-dependent manner. This Aspergillus terreus (strain NIH 2624 / FGSC A1156) protein is Translation factor guf1, mitochondrial (guf1).